The primary structure comprises 181 residues: MKCLLLALGLSLMCGNQATDIPQTMQDLDLQEVAGRWHSVAMVASDISLLDSESVPLRVYVEELRPTPEGNLEIILREGANHACVERNIVAQKTEDPAVFTVNYQGERKISVLDTDYAHYMFFCVGPPLPSAEHGMVCQYLARTQKVDEEVMEKFSRALQPLPGRVQIVQDPSGGQERCGF.

Positions 1–18 (MKCLLLALGLSLMCGNQA) are cleaved as a signal peptide. 2 cysteine pairs are disulfide-bonded: cysteine 84–cysteine 179 and cysteine 124–cysteine 138.

The protein belongs to the calycin superfamily. Lipocalin family. In terms of assembly, monomer.

Its subcellular location is the secreted. Lactoglobulin is the primary component of whey, it binds retinol and is probably involved in the transport of that molecule. This Equus caballus (Horse) protein is Beta-lactoglobulin-2 (LGB2).